The chain runs to 161 residues: Cyclic pyranopterin monophosphate synthase (161 aa).

Residues 78 to 80 and 116 to 117 contribute to the substrate site; these read MCH and ME. D131 is a catalytic residue.

The protein belongs to the MoaC family. In terms of assembly, homohexamer; trimer of dimers.

It carries out the reaction (8S)-3',8-cyclo-7,8-dihydroguanosine 5'-triphosphate = cyclic pyranopterin phosphate + diphosphate. It participates in cofactor biosynthesis; molybdopterin biosynthesis. Its function is as follows. Catalyzes the conversion of (8S)-3',8-cyclo-7,8-dihydroguanosine 5'-triphosphate to cyclic pyranopterin monophosphate (cPMP). The chain is Cyclic pyranopterin monophosphate synthase from Nitratidesulfovibrio vulgaris (strain ATCC 29579 / DSM 644 / CCUG 34227 / NCIMB 8303 / VKM B-1760 / Hildenborough) (Desulfovibrio vulgaris).